The primary structure comprises 130 residues: Small ribosomal subunit protein bS18 (130 aa).

Basic and acidic residues-rich tracts occupy residues 98 to 108 (KKMEESVKSAE) and 117 to 130 (EESK…AKTE). The interval 98-130 (KKMEESVKSAEPKATAEATEESKPKRTRKAKTE) is disordered.

Belongs to the bacterial ribosomal protein bS18 family. In terms of assembly, part of the 30S ribosomal subunit. Forms a tight heterodimer with protein bS6.

Its function is as follows. Binds as a heterodimer with protein bS6 to the central domain of the 16S rRNA, where it helps stabilize the platform of the 30S subunit. This chain is Small ribosomal subunit protein bS18, found in Metamycoplasma arthritidis (strain 158L3-1) (Mycoplasma arthritidis).